Here is a 563-residue protein sequence, read N- to C-terminus: Putative cytochrome c oxidase subunit 1-beta (563 aa).

7 helical membrane passes run 34–54 (IGHL…VMAL), 76–96 (LFTL…FAGF), 117–137 (MLSY…LAVP), 164–184 (MWIM…VNFL), 208–228 (LFTS…LLVL), 252–272 (LFWF…FGII), and 284–304 (IFGY…SVVV). Residue H80 participates in Fe(II)-heme a binding. 2 residues coordinate Cu cation: H258 and Y262. The segment at residues 258–262 (HPEVY) is a cross-link (1'-histidyl-3'-tyrosine (His-Tyr)). Positions 307 and 308 each coordinate Cu cation. Helical transmembrane passes span 309–329 (MFAT…LIAV) and 353–373 (MLWA…GVIL). H391 serves as a coordination point for heme a3. Transmembrane regions (helical) follow at residues 392–412 (FHYV…YFWW), 427–447 (IHFW…HWLG), and 470–490 (LSTI…YNVW). H393 lines the Fe(II)-heme a pocket. A disordered region spans residues 536–563 (AFDLHHPAHAGEAPQPEPKHEQADREPS). The span at 552 to 563 (EPKHEQADREPS) shows a compositional bias: basic and acidic residues.

The protein belongs to the heme-copper respiratory oxidase family. Associates with subunits II, III and IV to form cytochrome c oxidase. It depends on Cu(2+) as a cofactor. Heme serves as cofactor.

The protein resides in the cell membrane. The catalysed reaction is 4 Fe(II)-[cytochrome c] + O2 + 8 H(+)(in) = 4 Fe(III)-[cytochrome c] + 2 H2O + 4 H(+)(out). It functions in the pathway energy metabolism; oxidative phosphorylation. Its function is as follows. Cytochrome c oxidase is the component of the respiratory chain that catalyzes the reduction of oxygen to water. Subunits 1-3 form the functional core of the enzyme complex. CO I is the catalytic subunit of the enzyme. Electrons originating in cytochrome c are transferred via the copper A center of subunit 2 and heme A of subunit 1 to the bimetallic center formed by heme A3 and copper B. This is Putative cytochrome c oxidase subunit 1-beta (ctaD2) from Streptomyces avermitilis (strain ATCC 31267 / DSM 46492 / JCM 5070 / NBRC 14893 / NCIMB 12804 / NRRL 8165 / MA-4680).